The following is a 187-amino-acid chain: MEEKMDSKRIENAFFEVIEALGDVEYKEELKDTPKRIADSYKEIFYGIDIDPKEVLTKTFEVNSNELIMEKNMDFYSMCEHHFLPFFGTVCIAYVPNKKIFGFGDILKLIEILSRRPQLQERLTEEIAKYIYEILNCQGVYVVVEAKHLCVTMRGQKKENTKILTTSAKGVFETDSNKKLEVLTLLK.

Cys79, His82, and Cys150 together coordinate Zn(2+).

The protein belongs to the GTP cyclohydrolase I family. Toroid-shaped homodecamer, composed of two pentamers of five dimers.

It carries out the reaction GTP + H2O = 7,8-dihydroneopterin 3'-triphosphate + formate + H(+). It functions in the pathway cofactor biosynthesis; 7,8-dihydroneopterin triphosphate biosynthesis; 7,8-dihydroneopterin triphosphate from GTP: step 1/1. This Fusobacterium nucleatum subsp. nucleatum (strain ATCC 25586 / DSM 15643 / BCRC 10681 / CIP 101130 / JCM 8532 / KCTC 2640 / LMG 13131 / VPI 4355) protein is GTP cyclohydrolase 1.